The chain runs to 132 residues: Ribosome-binding factor A (132 aa).

This sequence belongs to the RbfA family. As to quaternary structure, monomer. Binds 30S ribosomal subunits, but not 50S ribosomal subunits or 70S ribosomes.

It is found in the cytoplasm. One of several proteins that assist in the late maturation steps of the functional core of the 30S ribosomal subunit. Associates with free 30S ribosomal subunits (but not with 30S subunits that are part of 70S ribosomes or polysomes). Required for efficient processing of 16S rRNA. May interact with the 5'-terminal helix region of 16S rRNA. The chain is Ribosome-binding factor A from Pectobacterium carotovorum subsp. carotovorum (strain PC1).